The chain runs to 442 residues: GTPase Der (442 aa).

2 EngA-type G domains span residues 2-167 (RTIA…PIQN) and 175-351 (FKFC…EQAM). Residues 8–15 (GKPNVGKS), 55–59 (DTGGI), 119–122 (NKIE), 181–188 (GRPNVGKS), 228–232 (DTAGI), and 293–296 (NKWD) each bind GTP. The KH-like domain maps to 352 to 436 (RKIATSLLND…PITLYWQDKN (85 aa)).

The protein belongs to the TRAFAC class TrmE-Era-EngA-EngB-Septin-like GTPase superfamily. EngA (Der) GTPase family. In terms of assembly, associates with the 50S ribosomal subunit.

In terms of biological role, GTPase that plays an essential role in the late steps of ribosome biogenesis. The protein is GTPase Der of Ureaplasma parvum serovar 3 (strain ATCC 27815 / 27 / NCTC 11736).